The chain runs to 381 residues: G-protein coupled receptor homolog Q2/3L (381 aa).

The Extracellular segment spans residues 1 to 91; that stretch reads MNYTLSTVSS…HCDDGVDTTS (91 aa). N-linked (GlcNAc...) asparagine; by host glycans are attached at residues N2, N15, N19, N41, N50, N56, and N62. The helical transmembrane segment at 92-112 threads the bilayer; the sequence is FGLITLYSTIFFLGLFGNIIV. Over 113–126 the chain is Cytoplasmic; it reads LTVLRKYKIKTIQD. A helical transmembrane segment spans residues 127–147; the sequence is MFLLNLTLSDLIFVLVFPFNL. Residues 148–165 lie on the Extracellular side of the membrane; it reads YDSIAKQWSLGDCLCKFK. The chain crosses the membrane as a helical span at residues 166–186; sequence AMFYFVGFYNSMSFITLMSID. The Cytoplasmic segment spans residues 187-206; that stretch reads RYLAVVHPVKSMPIRTKRYG. Residues 207-227 form a helical membrane-spanning segment; sequence IVLSMVVWIVSTIESFPIMLF. The Extracellular portion of the chain corresponds to 228–251; that stretch reads YETKKVYGITYCHVFYNDNAKIWK. Residues 252–272 traverse the membrane as a helical segment; that stretch reads LFINFEINIFGMIIPLTILLY. Over 273 to 294 the chain is Cytoplasmic; sequence CYYKILNTLKTSQTKNKKAIKM. A helical transmembrane segment spans residues 295–315; the sequence is VFLIVICSVLFLLPFSVTVFV. Residues 316-336 are Extracellular-facing; it reads SSLYLLNVFSGCMALRFVNLA. Residues 337–357 form a helical membrane-spanning segment; that stretch reads VHVAEIVSLCHCFINPLIYAF. Topologically, residues 358–381 are cytoplasmic; the sequence is CSREFTKKLLRLRTTSSAGSISIG.

This sequence belongs to the G-protein coupled receptor 1 family.

Its subcellular location is the host cell membrane. In terms of biological role, putative chemokine receptor. The sequence is that of G-protein coupled receptor homolog Q2/3L from Ovis aries (Sheep).